The following is a 459-amino-acid chain: Jacalin-related lectin 12 (459 aa).

3 Jacalin-type lectin domains span residues 2–148 (SQDS…YFTP), 151–296 (PTRM…YITT), and 298–443 (TLTK…YSFP).

It belongs to the jacalin lectin family.

This chain is Jacalin-related lectin 12 (JAL12), found in Arabidopsis thaliana (Mouse-ear cress).